A 96-amino-acid chain; its full sequence is uncharacterized protein (96 aa).

The protein belongs to the NifU family.

This is an uncharacterized protein from Azotobacter vinelandii.